A 364-amino-acid polypeptide reads, in one-letter code: MHITQLVLRHFRCFDVVDFFPLPGLNFFIGENGSGKTSLLEAVHLMGYGRSFRGRVRDGLIRHGSENLEIFVDWQETALINARRRRAGLSHYGQEWIGRLDGQKIMHLASLCAALAVITFESSSYQLINSNAELRRRFLDWGLFHVEPDFLDLWRRYTHVLKQRNSLLKQKEELAMLEAWDQKLSEVGEQLTFRRFQYLERLKQRVIPLISRITPNLKIHGFNFNHGWRRHELPLIDALFISRERDYQYGYTSLGPHRSDWTPQFSSIPGVHFLSRGQGKLITLMCLLAQAQDFFDQRGEWPILALDDLASELDQKHQWRVLEMLAEIPAQVLITGTEIPQGLKPFFSVGAMFHVEHGAITRMF.

30-37 (GENGSGKT) is a binding site for ATP.

It belongs to the RecF family.

Its subcellular location is the cytoplasm. Functionally, the RecF protein is involved in DNA metabolism; it is required for DNA replication and normal SOS inducibility. RecF binds preferentially to single-stranded, linear DNA. It also seems to bind ATP. The polypeptide is DNA replication and repair protein RecF (Xylella fastidiosa (strain M23)).